The sequence spans 2627 residues: Telomerase protein component 1 (2627 aa).

TEP1 N-terminal repeat units follow at residues 1-30 (MEKLHGHVSAHPDILSLENRCLAMLPDLQP), 31-60 (LEKLHQHVSTHSDILSLKNQCLATLPDLKT), 61-90 (MEKPHGYVSAHPDILSLENQCLATLSDLKT), and 91-120 (MEKPHGHVSAHPDILSLENRCLATLSSLKS). Disordered stretches follow at residues 193–214 (FDSEEKKGAETQMPSYSLSLGE) and 383–402 (RKHRAKRHPRRPPRSPGMEP). Residues 223–676 (VKLTSGDSES…VKHSLPLLPG (454 aa)) form the TROVE domain. Residues 383–395 (RKHRAKRHPRRPP) are compositionally biased toward basic residues. The region spanning 1162–1490 (RLSLVTGQSG…PLERPGARLC (329 aa)) is the NACHT domain. Position 1168–1175 (1168–1175 (GQSGQGKT)) interacts with ATP. WD repeat units follow at residues 1411-1448 (VLPQALTALEVTRSGLTVDQLHGVLSVWRTLPKGTKSW), 1674-1713 (AVSSSPTAVAFSTNGQRAAVGTANGTVYLLDLRTWQEEKS), 1716-1754 (SGCDGISACLFLSDDTLFLTAFDGLLELWDLQHGCRVLQ), 1757-1796 (AHQYQITGCCLSPDCRLLATVCLGGCLKLWDTVRGQLAFQ), 1798-1837 (TYPKSLNCVAFHPEGQVIATGSWAGSISFFQVDGLKVTKD), 1840-1879 (APGASIRTLAFNVPGGVVAVGRLDSMVELWAWREGARLAA), 1882-1921 (AHHGFVAAALFLHAGCQLLTAGEDGKVQVWSGSLGRPRGH), 1925-1964 (LSLSPALSVALSPDGDRVAVGYRADGIRIYKISSGSQGAQ), 1967-2005 (ALDVAVSALAWLSPKVLVSGAEDGSLQGWALKECSLQSL), 2008-2047 (LSRFQKPVLGLATSQELLASASEDFTVQLWPRQLLTRPHK), 2059-2098 (GHEGPVSCCSFSTDGGSLATGGRDRSLLCWDVRTPKTPVL), 2105-2143 (CHRDWVTGCAWTKDNLLISCSSDGSVGLWDPESGQRLGQ), 2146-2183 (GHQSAVSAVAAVEEHVVSVSRDGTLKVWDHQGVELTSI), 2185-2233 (AHSG…QTHT), 2236-2275 (GHSGPVRAAAVSETSGLMLTASEDGSVRLWQVPKEADDTC), 2278-2317 (RSSAAVTAVAWAPDGSMAVSGNQAGELILWQEAKAVATAQ), 2319-2355 (PGHIGALIWSSAHTFFVLSADEKISEWQVKLRKGSAP), 2368-2417 (EDLG…PMIL), and 2459-2500 (NPSR…GEWT). Over residues 2506–2522 (QKKANTPETQTPGTDPS) the composition is skewed to polar residues. The tract at residues 2506-2551 (QKKANTPETQTPGTDPSTCRESDASMDSDASMDSEPTPHLKTRQRR) is disordered. WD repeat units follow at residues 2553-2590 (IHSGSVTALHVLPELLVTASKDRDVKLWERPSMQLLGL) and 2592-2626 (RCEGSVSCLEPWLGANSTLQLAVGDVQGNVYFLNW).

Associated component of the telomerase holoenzyme complex. Component of the vault ribonucleoprotein particle, at least composed of MVP, PARP4 and one or more vault RNAs (vRNAs). Binds to VAULTRC1, VAULTRC2 and VAULTRC4/hvg4 vRNAs. As to expression, ubiquitous.

The protein resides in the nucleus. The protein localises to the chromosome. It localises to the telomere. Functionally, component of the telomerase ribonucleoprotein complex that is essential for the replication of chromosome termini. Also a component of the ribonucleoprotein vaults particle, a multi-subunit structure involved in nucleo-cytoplasmic transport. Responsible for the localizing and stabilizing vault RNA (vRNA) association in the vault ribonucleoprotein particle. Binds to TERC. The polypeptide is Telomerase protein component 1 (TEP1) (Homo sapiens (Human)).